A 277-amino-acid chain; its full sequence is Phosphoribosylaminoimidazole-succinocarboxamide synthase (277 aa).

This sequence belongs to the SAICAR synthetase family.

It catalyses the reaction 5-amino-1-(5-phospho-D-ribosyl)imidazole-4-carboxylate + L-aspartate + ATP = (2S)-2-[5-amino-1-(5-phospho-beta-D-ribosyl)imidazole-4-carboxamido]succinate + ADP + phosphate + 2 H(+). The protein operates within purine metabolism; IMP biosynthesis via de novo pathway; 5-amino-1-(5-phospho-D-ribosyl)imidazole-4-carboxamide from 5-amino-1-(5-phospho-D-ribosyl)imidazole-4-carboxylate: step 1/2. The protein is Phosphoribosylaminoimidazole-succinocarboxamide synthase of Salinispora arenicola (strain CNS-205).